Here is an 837-residue protein sequence, read N- to C-terminus: Cap-specific mRNA (nucleoside-2'-O-)-methyltransferase 1 (837 aa).

Residues 1–66 (MKRRTDPECT…EGKQPCSDDF (66 aa)) form a disordered region. The short motif at 2–18 (KRRTDPECTAPLKKQKR) is the Bipartite nuclear localization signal element. A phosphoserine mark is found at Ser27, Ser30, and Ser52. Residues 56–66 (TEGKQPCSDDF) are compositionally biased toward basic and acidic residues. The region spanning 86-132 (YNSVSQRLMAKMGFREGEGLGKYSQGRKDIVETSNQKGRRGLGLTLQ) is the G-patch domain. A Phosphoserine modification is found at Ser90. Lys107 is subject to N6-acetyllysine. Substrate contacts are provided by residues 202-206 (KSVFD) and Arg217. One can recognise a RrmJ-type SAM-dependent 2'-O-MTase domain in the interval 230-449 (FFLNRAAMKM…ERYVVCKGLK (220 aa)). Asn233 contacts S-adenosyl-L-methionine. Residue Lys238 is part of the active site. Residues 276 to 282 (CAGPGGF) and 334 to 335 (DI) contribute to the S-adenosyl-L-methionine site. Asp363 is an active-site residue. Substrate is bound at residue 373–375 (NLQ). Lys403 acts as the Proton acceptor in catalysis. Asn438 provides a ligand contact to substrate. Residues 726–834 (SGGTPKLSYT…VLSFIQSHNP (109 aa)) form an interaction with POLR2A region. The WW domain occupies 751–785 (RTVNEPWTMGFSKSNNRKFFYNKKTQKSVYALPTE).

Interacts with POLR2A (via C-terminus).

Its subcellular location is the nucleus. The catalysed reaction is a 5'-end (N(7)-methyl 5'-triphosphoguanosine)-ribonucleoside in mRNA + S-adenosyl-L-methionine = a 5'-end (N(7)-methyl 5'-triphosphoguanosine)-(2'-O-methyl-ribonucleoside) in mRNA + S-adenosyl-L-homocysteine + H(+). In terms of biological role, S-adenosyl-L-methionine-dependent methyltransferase that mediates mRNA cap1 2'-O-ribose methylation to the 5'-cap structure of mRNAs. Methylates the ribose of the first nucleotide of a m(7)GpppG-capped mRNA and small nuclear RNA (snRNA) to produce m(7)GpppRm (cap1). Displays a preference for cap0 transcripts. Cap1 modification is linked to higher levels of translation. May be involved in the interferon response pathway. This Mus musculus (Mouse) protein is Cap-specific mRNA (nucleoside-2'-O-)-methyltransferase 1 (Cmtr1).